The following is an 872-amino-acid chain: Probable LRR receptor-like serine/threonine-protein kinase At1g51880 (872 aa).

The N-terminal stretch at 1–23 (MKSIHGFLLFLITAYVILESVQA) is a signal peptide. The Extracellular segment spans residues 24-513 (QDQLGFISLD…GKSKKVPMIP (490 aa)). 9 N-linked (GlcNAc...) asparagine glycosylation sites follow: Asn-40, Asn-49, Asn-96, Asn-181, Asn-255, Asn-268, Asn-294, Asn-339, and Asn-401. LRR repeat units follow at residues 411 to 434 (RIIS…SKLT), 435 to 457 (QLIE…FADM), and 459 to 482 (LLKL…IQQR). Residues Asn-464 and Asn-472 are each glycosylated (N-linked (GlcNAc...) asparagine). A helical transmembrane segment spans residues 514 to 534 (IVASVAGVFALLVILAIFFVV). The Cytoplasmic segment spans residues 535–872 (RRKNGESNKG…SASEFSPGAR (338 aa)). Position 557 is a phosphothreonine (Thr-557). The Protein kinase domain occupies 566–838 (NNFERVLGKG…HVVTELNECV (273 aa)). Residues 572 to 580 (LGKGGFGTV) and Lys-593 each bind ATP. Tyr-638 is modified (phosphotyrosine). Catalysis depends on Asp-690, which acts as the Proton acceptor. Residue Ser-724 is modified to Phosphoserine. Thr-725 and Thr-730 each carry phosphothreonine. Tyr-738 carries the post-translational modification Phosphotyrosine.

It belongs to the protein kinase superfamily. Ser/Thr protein kinase family.

It is found in the membrane. The catalysed reaction is L-seryl-[protein] + ATP = O-phospho-L-seryl-[protein] + ADP + H(+). It catalyses the reaction L-threonyl-[protein] + ATP = O-phospho-L-threonyl-[protein] + ADP + H(+). This is Probable LRR receptor-like serine/threonine-protein kinase At1g51880 from Arabidopsis thaliana (Mouse-ear cress).